The primary structure comprises 624 residues: MAIVSSVPLASKSCLHKSLISSIHKLKPFCRTIPTLGMSRPGKSVMPSMSMSSPVSDDGVQRRTGGYHSNLWNDDIIQFLSTPYGEPAYRERGERLIDEVKNMFNSISMEDVEFSPLNDLIQRLWIVDSVERLGIDRHFKNEIKSTLDYVYSYWTQKGIGCGIESVVPDLNSTALGLRTLRLHGYPVSAEVLKHFQNQNGQFACSPSETEGEMRSIVNLYRASLIAFPGEKVMEEAEIFSTKYLKEALQKIPVSSLSREIGDVLEQDWHTNLPRLEARNYIDVFGQDTKDTKLYMKTEKLLELAKLEFNIFQSLQKTELDSLLRWWKDSGFHHITFSRHLHVEYYTLASCIAFEPQHSRFRLGFAKACHVITILDDMYDVFGTIDELELFTAQIKRWDPSATDCLPKYMKRMYMILYDMVNEMSREAETAQGRDTLNYARQAWEDFIDSYMQEAKWIATGYLPTFDEYFENGKVSSGHRVAALQPILTMDIPFPHDILKEVDFPSKLNDLASAILRLRGDTRCYKADRARGEEASCISCYMKDNPGATEEDALSHINAVINDVIKGLNWELLNPNSSVPISSKKHVFDVSRALHYGYKYRDGYSVSNIETKSLVMRTLLESVPF.

The transit peptide at 1 to 48 (MAIVSSVPLASKSCLHKSLISSIHKLKPFCRTIPTLGMSRPGKSVMPS) directs the protein to the chloroplast. Residues 41-60 (PGKSVMPSMSMSSPVSDDGV) are disordered. Positions 44–56 (SVMPSMSMSSPVS) are enriched in low complexity. Mg(2+) is bound by residues Asp375, Asp379, and Asp527. The DDXXD motif motif lies at 375–379 (DDMYD).

This sequence belongs to the terpene synthase family. Tpsd subfamily. Mg(2+) serves as cofactor. The cofactor is Mn(2+).

The protein resides in the plastid. The protein localises to the chloroplast. The catalysed reaction is (2E)-geranyl diphosphate = (-)-beta-phellandrene + diphosphate. Its pathway is terpene metabolism; oleoresin biosynthesis. Terpene synthase (TPS) involved in the biosynthesis of monoterpene natural products included in conifer oleoresin secretions and volatile emissions; these compounds contribute to biotic and abiotic stress defense against herbivores and pathogens. Catalyzes the conversion of (2E)-geranyl diphosphate (GPP) to (-)-beta-phellandrene. The sequence is that of (-)-beta-phellandrene synthase 4, chloroplastic from Picea sitchensis (Sitka spruce).